The primary structure comprises 638 residues: Probable ATP-binding protein YheS (638 aa).

2 consecutive ABC transporter domains span residues 2–246 and 313–531; these read IIFS…AQQT and VMIE…STSE. Residues 34 to 41 and 349 to 356 contribute to the ATP site; these read GKNGCGKS and GKNGAGKS. A disordered region spans residues 525–563; sequence EQNSTSENKVSEKVGDNENSVQNRKEQKRREAELRQQTA. Basic and acidic residues predominate over residues 547–558; the sequence is NRKEQKRREAEL.

It belongs to the ABC transporter superfamily. ABCF family. YheS subfamily.

Its function is as follows. Genetic data indicate it may be involved in ribosome assembly or function. This Haemophilus influenzae (strain ATCC 51907 / DSM 11121 / KW20 / Rd) protein is Probable ATP-binding protein YheS.